The sequence spans 381 residues: Probable peptidoglycan glycosyltransferase FtsW (381 aa).

Helical transmembrane passes span 16–36 (LVLL…VYSA), 56–76 (LIFA…DYQL), 80–100 (WAVP…IPGI), 145–165 (LLSA…GLLL), 168–188 (PDMG…FAAG), 191–211 (LIFI…LVVH), 274–294 (VIGE…FFIL), 312–332 (FLAL…MAVV), and 343–363 (LPFL…VGIL).

This sequence belongs to the SEDS family. FtsW subfamily.

Its subcellular location is the cell inner membrane. The catalysed reaction is [GlcNAc-(1-&gt;4)-Mur2Ac(oyl-L-Ala-gamma-D-Glu-L-Lys-D-Ala-D-Ala)](n)-di-trans,octa-cis-undecaprenyl diphosphate + beta-D-GlcNAc-(1-&gt;4)-Mur2Ac(oyl-L-Ala-gamma-D-Glu-L-Lys-D-Ala-D-Ala)-di-trans,octa-cis-undecaprenyl diphosphate = [GlcNAc-(1-&gt;4)-Mur2Ac(oyl-L-Ala-gamma-D-Glu-L-Lys-D-Ala-D-Ala)](n+1)-di-trans,octa-cis-undecaprenyl diphosphate + di-trans,octa-cis-undecaprenyl diphosphate + H(+). It functions in the pathway cell wall biogenesis; peptidoglycan biosynthesis. Its function is as follows. Peptidoglycan polymerase that is essential for cell division. This chain is Probable peptidoglycan glycosyltransferase FtsW, found in Trichlorobacter lovleyi (strain ATCC BAA-1151 / DSM 17278 / SZ) (Geobacter lovleyi).